A 500-amino-acid chain; its full sequence is ATP synthase subunit alpha (500 aa).

Residue 169–176 (GDRQTGKT) coordinates ATP.

It belongs to the ATPase alpha/beta chains family. As to quaternary structure, F-type ATPases have 2 components, CF(1) - the catalytic core - and CF(0) - the membrane proton channel. CF(1) has five subunits: alpha(3), beta(3), gamma(1), delta(1), epsilon(1). CF(0) has three main subunits: a(1), b(2) and c(9-12). The alpha and beta chains form an alternating ring which encloses part of the gamma chain. CF(1) is attached to CF(0) by a central stalk formed by the gamma and epsilon chains, while a peripheral stalk is formed by the delta and b chains.

It localises to the cell membrane. It carries out the reaction ATP + H2O + 4 H(+)(in) = ADP + phosphate + 5 H(+)(out). Its function is as follows. Produces ATP from ADP in the presence of a proton gradient across the membrane. The alpha chain is a regulatory subunit. The chain is ATP synthase subunit alpha from Lactococcus lactis subsp. cremoris (strain SK11).